A 433-amino-acid polypeptide reads, in one-letter code: Homogentisate 1,2-dioxygenase (433 aa).

Residue histidine 288 is the Proton acceptor of the active site. Residues histidine 331 and glutamate 337 each coordinate Fe cation. Residues tyrosine 346 and histidine 367 each coordinate homogentisate. Histidine 367 contacts Fe cation.

It belongs to the homogentisate dioxygenase family. Hexamer; dimer of trimers. Fe cation serves as cofactor.

It catalyses the reaction homogentisate + O2 = 4-maleylacetoacetate + H(+). The protein operates within amino-acid degradation; L-phenylalanine degradation; acetoacetate and fumarate from L-phenylalanine: step 4/6. Involved in the catabolism of homogentisate (2,5-dihydroxyphenylacetate or 2,5-OH-PhAc), a central intermediate in the degradation of phenylalanine and tyrosine. Catalyzes the oxidative ring cleavage of the ar omatic ring of 2,5-dihydroxyphenylacetate to yield maleylacetoacetate. This chain is Homogentisate 1,2-dioxygenase, found in Pseudomonas putida (strain ATCC 47054 / DSM 6125 / CFBP 8728 / NCIMB 11950 / KT2440).